Consider the following 520-residue polypeptide: Transactivator/viroplasmin protein (520 aa).

The segment at 487-520 (QDASADSGPKDGPPPTRSIVEKEDVPTTSSKQVD) is disordered.

It belongs to the caulimoviridae viroplasmin family.

The protein resides in the host cytoplasm. In terms of biological role, enhances the ribosomal termination-reinitiation event leading to the translation of major open reading frames on the polycistronic viral RNAs. The protein is Transactivator/viroplasmin protein of Cauliflower mosaic virus (strain CM-1841) (CaMV).